Here is a 370-residue protein sequence, read N- to C-terminus: Anhydro-N-acetylmuramic acid kinase (370 aa).

12–19 provides a ligand contact to ATP; that stretch reads GTSLDGID.

The protein belongs to the anhydro-N-acetylmuramic acid kinase family.

The enzyme catalyses 1,6-anhydro-N-acetyl-beta-muramate + ATP + H2O = N-acetyl-D-muramate 6-phosphate + ADP + H(+). It functions in the pathway amino-sugar metabolism; 1,6-anhydro-N-acetylmuramate degradation. The protein operates within cell wall biogenesis; peptidoglycan recycling. Its function is as follows. Catalyzes the specific phosphorylation of 1,6-anhydro-N-acetylmuramic acid (anhMurNAc) with the simultaneous cleavage of the 1,6-anhydro ring, generating MurNAc-6-P. Is required for the utilization of anhMurNAc either imported from the medium or derived from its own cell wall murein, and thus plays a role in cell wall recycling. The protein is Anhydro-N-acetylmuramic acid kinase of Yersinia enterocolitica serotype O:8 / biotype 1B (strain NCTC 13174 / 8081).